The sequence spans 161 residues: Endoribonuclease YbeY (161 aa).

The Zn(2+) site is built by His-121, His-125, and His-131.

Belongs to the endoribonuclease YbeY family. Requires Zn(2+) as cofactor.

Its subcellular location is the cytoplasm. In terms of biological role, single strand-specific metallo-endoribonuclease involved in late-stage 70S ribosome quality control and in maturation of the 3' terminus of the 16S rRNA. The chain is Endoribonuclease YbeY from Xanthomonas oryzae pv. oryzae (strain MAFF 311018).